The sequence spans 367 residues: 3-isopropylmalate dehydrogenase (367 aa).

G75 to E88 contributes to the NAD(+) binding site. Residues R95, R105, R133, and D230 each coordinate substrate. Residues D230, D254, and D258 each contribute to the Mg(2+) site. Residue G288–N300 participates in NAD(+) binding.

The protein belongs to the isocitrate and isopropylmalate dehydrogenases family. LeuB type 1 subfamily. In terms of assembly, homodimer. The cofactor is Mg(2+). Mn(2+) serves as cofactor.

The protein resides in the cytoplasm. It catalyses the reaction (2R,3S)-3-isopropylmalate + NAD(+) = 4-methyl-2-oxopentanoate + CO2 + NADH. Its pathway is amino-acid biosynthesis; L-leucine biosynthesis; L-leucine from 3-methyl-2-oxobutanoate: step 3/4. Catalyzes the oxidation of 3-carboxy-2-hydroxy-4-methylpentanoate (3-isopropylmalate) to 3-carboxy-4-methyl-2-oxopentanoate. The product decarboxylates to 4-methyl-2 oxopentanoate. This Psychrobacter arcticus (strain DSM 17307 / VKM B-2377 / 273-4) protein is 3-isopropylmalate dehydrogenase.